Here is a 591-residue protein sequence, read N- to C-terminus: CDK5RAP3 protein homolog (591 aa).

Positions 232-250 are enriched in low complexity; it reads RAGAPSSAKGPASSASAPP. 2 disordered regions span residues 232-252 and 269-303; these read RAGAPSSAKGPASSASAPPAL and TAPPEAESGAAGAGASGQGGGIEIDWGDSGGDAGG. Over residues 279–303 the composition is skewed to gly residues; it reads AGAGASGQGGGIEIDWGDSGGDAGG. 3 short sequence motifs (shuffled ATG8-binding motif) span residues 311–314, 334–337, and 369–372; these read IDWD and INWD. Low complexity predominate over residues 386–401; that stretch reads NNRAGDVAEGEAAASL. The disordered stretch occupies residues 386–416; sequence NNRAGDVAEGEAAASLSGGGGGGASSGDPDD.

The protein belongs to the CDK5RAP3 family. Substrate adapter component of the UFM1 ribosome E3 ligase (UREL) complex. Interacts with ATG8 family proteins.

Functionally, substrate adapter of E3 ligase complexes mediating ufmylation, the covalent attachment of the ubiquitin-like modifier UFM1 to substrate proteins, and which is involved in various processes, such as ribosome recycling and reticulophagy (also called ER-phagy). The protein is CDK5RAP3 protein homolog of Chlamydomonas reinhardtii (Chlamydomonas smithii).